Here is a 682-residue protein sequence, read N- to C-terminus: Potassium-transporting ATPase ATP-binding subunit (682 aa).

Transmembrane regions (helical) follow at residues 34–54 (PVMF…IAMA), 62–82 (ALFS…ANFA), 219–239 (IALT…TATL), and 254–274 (VLVA…LSAI). Catalysis depends on Asp307, which acts as the 4-aspartylphosphate intermediate. ATP contacts are provided by residues Asp344, Glu348, 377–384 (FTAQSRMS), and Lys395. 2 residues coordinate Mg(2+): Asp518 and Asp522. 3 helical membrane-spanning segments follow: residues 588 to 608 (FAII…LNIM), 616 to 636 (AILS…PLAL), and 656 to 676 (IYGL…DLLL).

The protein belongs to the cation transport ATPase (P-type) (TC 3.A.3) family. Type IA subfamily. In terms of assembly, the system is composed of three essential subunits: KdpA, KdpB and KdpC.

The protein resides in the cell inner membrane. It carries out the reaction K(+)(out) + ATP + H2O = K(+)(in) + ADP + phosphate + H(+). In terms of biological role, part of the high-affinity ATP-driven potassium transport (or Kdp) system, which catalyzes the hydrolysis of ATP coupled with the electrogenic transport of potassium into the cytoplasm. This subunit is responsible for energy coupling to the transport system and for the release of the potassium ions to the cytoplasm. This chain is Potassium-transporting ATPase ATP-binding subunit, found in Escherichia fergusonii (strain ATCC 35469 / DSM 13698 / CCUG 18766 / IAM 14443 / JCM 21226 / LMG 7866 / NBRC 102419 / NCTC 12128 / CDC 0568-73).